We begin with the raw amino-acid sequence, 357 residues long: UDP-N-acetylglucosamine--N-acetylmuramyl-(pentapeptide) pyrophosphoryl-undecaprenol N-acetylglucosamine transferase (357 aa).

Residues 13–15 (TGG), asparagine 122, arginine 163, serine 191, and glutamine 288 each bind UDP-N-acetyl-alpha-D-glucosamine.

This sequence belongs to the glycosyltransferase 28 family. MurG subfamily.

The protein localises to the cell inner membrane. The catalysed reaction is di-trans,octa-cis-undecaprenyl diphospho-N-acetyl-alpha-D-muramoyl-L-alanyl-D-glutamyl-meso-2,6-diaminopimeloyl-D-alanyl-D-alanine + UDP-N-acetyl-alpha-D-glucosamine = di-trans,octa-cis-undecaprenyl diphospho-[N-acetyl-alpha-D-glucosaminyl-(1-&gt;4)]-N-acetyl-alpha-D-muramoyl-L-alanyl-D-glutamyl-meso-2,6-diaminopimeloyl-D-alanyl-D-alanine + UDP + H(+). It participates in cell wall biogenesis; peptidoglycan biosynthesis. In terms of biological role, cell wall formation. Catalyzes the transfer of a GlcNAc subunit on undecaprenyl-pyrophosphoryl-MurNAc-pentapeptide (lipid intermediate I) to form undecaprenyl-pyrophosphoryl-MurNAc-(pentapeptide)GlcNAc (lipid intermediate II). This Gloeobacter violaceus (strain ATCC 29082 / PCC 7421) protein is UDP-N-acetylglucosamine--N-acetylmuramyl-(pentapeptide) pyrophosphoryl-undecaprenol N-acetylglucosamine transferase.